The primary structure comprises 142 residues: Hemoglobin subunit alpha-B (142 aa).

The 141-residue stretch at 2 to 142 (VLSPTDKSNV…VSTVLTSKYR (141 aa)) folds into the Globin domain. His-59 contacts O2. Heme b is bound at residue His-88.

This sequence belongs to the globin family. Heterotetramer of two alpha chains and two beta chains. As to expression, red blood cells.

In terms of biological role, involved in oxygen transport from the lung to the various peripheral tissues. This is Hemoglobin subunit alpha-B (HBAB) from Otolemur crassicaudatus (Brown greater galago).